The sequence spans 249 residues: Oxidoreductase asL5 (249 aa).

NADP(+) contacts are provided by isoleucine 21, lysine 45, asparagine 90, tyrosine 155, lysine 159, isoleucine 188, and threonine 190. The active-site Proton acceptor is the tyrosine 155. The active-site Lowers pKa of active site Tyr is the lysine 159.

The protein belongs to the short-chain dehydrogenases/reductases (SDR) family.

Its function is as follows. Oxidoreductase; part of the gene cluster that mediates the biosynthesis of xenovulene A, an unusual meroterpenoid that has potent inhibitory effects on the human gamma-aminobutyrate A (GABAA) benzodiazepine receptor. The first step of xenovulene A biosynthesis is the biosynthesis of 3-methylorcinaldehyde performed by the non-reducing polyketide synthase aspks1. The salicylate hydroxylase asL1 then catalyzes the oxidative dearomatization of 3-methylorcinaldehyde to yield a dearomatized hydroxycyclohexadione. The 2-oxoglutarate-dependent dioxygenase asL3 further catalyzes the oxidative ring expansion to provide the first tropolone metabolite. The cytochrome P450 monooxygenase asR2 allows the synthesis of tropolone hemiacetal. In parallel, a previously unrecognised class of terpene cyclase, asR6, produces alpha-humulene from farnesylpyrophosphate (FPP). The putative Diels-Alderase asR5 probably catalyzes the formation of the tropolone-humulene skeleton by linking humulene and the polyketide moiety. Oxidative-ring contractions catalyzed by asL4 and asL6 then processively remove carbon atoms from the polyketide to yield xenovulene A. This chain is Oxidoreductase asL5, found in Sarocladium schorii (Acremonium strictum (strain IMI 501407)).